Consider the following 1109-residue polypeptide: ABC transporter G family member 28 (1109 aa).

2 consecutive transmembrane segments (helical) span residues N5–Q25 and N291–Y311. Residues Q325–K411 form a disordered region. Residues S339–T357 show a composition bias toward basic and acidic residues. The region spanning V499 to E741 is the ABC transporter domain. ATP is bound at residue G533–T540. Residues Q859 to A1056 form the ABC transmembrane type-2 domain. 6 helical membrane passes run L879–V899, F904–A924, T954–F974, V986–F1006, P1008–S1028, and C1084–V1104.

Belongs to the ABC transporter superfamily. ABCG family. Eye pigment precursor importer (TC 3.A.1.204) subfamily.

The protein localises to the membrane. This chain is ABC transporter G family member 28 (ABCG28), found in Arabidopsis thaliana (Mouse-ear cress).